Here is a 273-residue protein sequence, read N- to C-terminus: 3-methyl-2-oxobutanoate hydroxymethyltransferase 2 (273 aa).

Positions 50 and 89 each coordinate Mg(2+). 3-methyl-2-oxobutanoate-binding positions include 50–51 (DS), Asp89, and Lys119. Glu121 contributes to the Mg(2+) binding site. The Proton acceptor role is filled by Glu188.

It belongs to the PanB family. Homodecamer; pentamer of dimers. It depends on Mg(2+) as a cofactor.

The protein resides in the cytoplasm. The catalysed reaction is 3-methyl-2-oxobutanoate + (6R)-5,10-methylene-5,6,7,8-tetrahydrofolate + H2O = 2-dehydropantoate + (6S)-5,6,7,8-tetrahydrofolate. It functions in the pathway cofactor biosynthesis; (R)-pantothenate biosynthesis; (R)-pantoate from 3-methyl-2-oxobutanoate: step 1/2. Catalyzes the reversible reaction in which hydroxymethyl group from 5,10-methylenetetrahydrofolate is transferred onto alpha-ketoisovalerate to form ketopantoate. In Zymomonas mobilis subsp. mobilis (strain ATCC 31821 / ZM4 / CP4), this protein is 3-methyl-2-oxobutanoate hydroxymethyltransferase 2.